The chain runs to 572 residues: MMGSENDEESHLHSSKEEMEKLFLREDGDPLTKSNVNGDKSNSNYRSAMSTLFDSRHPSIVVTPADSDPLFAPPSYYSESRSPRSKPNGGDRVSSYLEPPSYADVIFSPFDDISEINGSEDGHSQSSDSLSRSPSSLSSDYIKITVSNPQKEQEATNSMIPGGSTYITYQITTRTNLSDYGGSEFSVRRRFRDIVTLADRLAESYRGFCIPPRPDKSIVESQVMQKQEFVEQRRVALEKYLRRLVAHPVIRNSDELKVFLQAQGKLPLATSTDVASRMLDGAVKLPKQLFGEGGGASSVEVVQPGRGGRDFLRMFKELRQSVSNDWGGSKPPVVEEDKEFLEKKEKMYDLEQQIINASQQAESLVKAQQDMGETMGELGLAFIKLTKFENEEAVFNSQRARANDMKNLATSAVKASRFYRELNSQTVKHLDTLHDYLGLMMAVQGAFADRSSALLTVQTLLSELSSLEARAEKLEVASSKVFGGDKSRIKKIEELKETIKVTEDSKNVAIREYEQIKENNWSEVERLDRERRADFLNMMKGFVANQVGYAEKIANVWTKVAEETRQYDRESS.

Disordered stretches follow at residues 1-97 (MMGS…SSYL) and 114-136 (SEINGSEDGHSQSSDSLSRSPSS). Residues 9 to 30 (ESHLHSSKEEMEKLFLREDGDP) show a composition bias toward basic and acidic residues. A compositionally biased stretch (polar residues) spans 32–53 (TKSNVNGDKSNSNYRSAMSTLF). Low complexity predominate over residues 124-136 (SQSSDSLSRSPSS). Phosphoserine is present on Ser-133. Positions 147–266 (SNPQKEQEAT…KVFLQAQGKL (120 aa)) constitute a PX domain. A 1,2-diacyl-sn-glycero-3-phospho-(1D-myo-inositol-3-phosphate) is bound by residues Arg-190, Lys-216, and Arg-233. A BAR domain is found at 318–572 (LRQSVSNDWG…ETRQYDRESS (255 aa)).

This sequence belongs to the sorting nexin family. In terms of assembly, homodimer. Heterodimer with SNX1 or SNX2B. Component of the retromer complex which consists of VPS29 (MAG1), VPS26 (VPS26A or VPS26B), VPS35 (VPS35A or VPS35B or VPS35C), VPS5/17 (SNX1 or SNX2A or SNX2B). Ubiquitously expressed.

Its subcellular location is the cytoplasm. It localises to the endosome membrane. The protein localises to the prevacuolar compartment membrane. It is found in the golgi apparatus. The protein resides in the trans-Golgi network membrane. Plays a role in vesicular protein sorting. Acts at the crossroads between the secretory and endocytic pathways. Is involved in the endosome to vacuole protein transport and, as component of the membrane-associated retromer complex, is also involved in endosome-to-Golgi retrograde transport. This is Sorting nexin 2B (SNX2B) from Arabidopsis thaliana (Mouse-ear cress).